The primary structure comprises 213 residues: Ras-like protein rasX (213 aa).

16–23 (GDGGVGKT) is a GTP binding site. An Effector region motif is present at residues 38–46 (YDPTIEDSY). Residues 63 to 67 (DTAGQ) and 122 to 125 (NKSD) each bind GTP. Cysteine methyl ester is present on C210. C210 carries S-geranylgeranyl cysteine lipidation. Residues 211-213 (KMM) constitute a propeptide, removed in mature form.

Belongs to the small GTPase superfamily. Ras family.

It is found in the cell membrane. The enzyme catalyses GTP + H2O = GDP + phosphate + H(+). Ras proteins bind GDP/GTP and possess intrinsic GTPase activity. The protein is Ras-like protein rasX (rasX) of Dictyostelium discoideum (Social amoeba).